A 702-amino-acid polypeptide reads, in one-letter code: SAGA complex subunit NGG1 (702 aa).

Basic residues predominate over residues 1-10 (MPRHGRRGKL). Disordered regions lie at residues 1–29 (MPRH…PSKL) and 90–224 (LRKI…VKNP). Basic and acidic residues-rich tracts occupy residues 11–22 (PKGEKLPKKEGG) and 90–108 (LRKI…EKQE). Polar residues predominate over residues 109-125 (TSNADGQHESSTATEET). S134 is modified (phosphoserine). Residues 162–219 (MAKEEINEDKDLQVHRDQPREKRPFDSETENRATENENTQRPDNKKQKIDVDKMENDP) are compositionally biased toward basic and acidic residues. S407 is subject to Phosphoserine. Residue T464 is modified to Phosphothreonine. Positions 606–618 (KRIRVPKKRKKHH) match the Nuclear localization signal motif. Disordered stretches follow at residues 611-636 (PKKR…IAQQ) and 672-702 (NESV…VELN). The segment covering 620–636 (AASNNVNTGTTSQIAQQ) has biased composition (polar residues). Positions 680–689 (DQEEDEDEAD) are enriched in acidic residues.

It belongs to the NGG1 family. Component of the 1.8 MDa SAGA (Spt-Ada-Gcn5 acetyltransferase) complex, which is composed of 19 subunits TRA1, SPT7, TAF5, NGG1/ADA3, SGF73, SPT20/ADA5, SPT8, TAF12, TAF6, HFI1/ADA1, UBP8, GCN5, ADA2, SPT3, SGF29, TAF10, TAF9, SGF11 and SUS1. The SAGA complex is composed of 4 modules, namely the HAT (histone acetyltransferase) module (GCN5, ADA2, NGG1/ADA3 and SGF29), the DUB (deubiquitinating) module (UBP8, SGF11, SGF73 and SUS1), the core or TAF (TBP-associated factor) module (TAF5, TAF6, TAF9, TAF10 and TAF12), and the Tra1 or SPT (Suppressor of Ty) module (TRA1, HFI1/ADA1, SPT3, SPT7, SPT8 and SPT20/ADA5). The Tra1/SPT module binds activators, the core module recruits TBP (TATA-binding protein), the HAT module contains the histone H3 acetyltransferase GCN5, and the DUB module comprises the histone H2B deubiquitinase UBP8. Also identified in an altered form of SAGA, named SALSA (SAGA altered, Spt8 absent) or SLIK (SAGA-like) complex, which contains a C-terminal truncated form of SPT7 and is missing SPT8. However, it has been shown that the SAGA and SAGA-like SALSA/SLIK transcriptional coactivators are structurally and biochemically equivalent. Component of the 0.8 MDa ADA complex, a HAT complex distinct from SAGA, which at least consists of ADA2, NGG1/ADA3, AHC1, AHC2, SGF29 and GCN5. Identified in an Ada.spt complex with SPT7 and TRA1. Component of an ADA/GCN5 complex that consists of HFI1/ADA1, ADA2, NGG1/ADA3, SPT20/ADA5 and GCN5 and probably is a subcomplex of SAGA.

It localises to the nucleus. Its function is as follows. Component of the transcription coactivator SAGA complex. SAGA acts as a general cofactor required for essentially all RNA polymerase II transcription. At the promoters, SAGA is required for transcription pre-initiation complex (PIC) recruitment. It influences RNA polymerase II transcriptional activity through different activities such as TBP interaction (via core/TAF module) and promoter selectivity, interaction with transcription activators (via Tra1/SPT module), and chromatin modification through histone acetylation (via HAT module) and deubiquitination (via DUB module). SAGA preferentially acetylates histones H3 (to form H3K9ac, H3K14ac, H3K18ac and H3K23ac) and H2B and deubiquitinates histone H2B. SAGA interacts with DNA via upstream activating sequences (UASs). Also identified in a modified version of SAGA named SALSA or SLIK. The cleavage of SPT7 and the absence of the SPT8 subunit in SLIK neither drive any major conformational differences in its structure compared with SAGA, nor significantly affect HAT, DUB, or DNA-binding activities. Component of the ADA histone acetyltransferase complex, which preferentially acetylates nucleosomal histones H3 (to form H3K14ac and H3K18ac) and H2B. May be involved in response to DNA damage by genotoxic agents. This is SAGA complex subunit NGG1 (NGG1) from Saccharomyces cerevisiae (strain ATCC 204508 / S288c) (Baker's yeast).